We begin with the raw amino-acid sequence, 85 residues long: Putative membrane protein insertion efficiency factor (85 aa).

Positions 62–85 (PLGSDGYDPVPEPKDRKPPHSPAG) are disordered.

Belongs to the UPF0161 family.

The protein resides in the cell inner membrane. Its function is as follows. Could be involved in insertion of integral membrane proteins into the membrane. This is Putative membrane protein insertion efficiency factor from Ruegeria pomeroyi (strain ATCC 700808 / DSM 15171 / DSS-3) (Silicibacter pomeroyi).